The following is a 407-amino-acid chain: tRNA pseudouridine synthase Pus10 (407 aa).

The active-site Nucleophile is Asp-232. Substrate is bound by residues Tyr-300 and Tyr-369.

Belongs to the pseudouridine synthase Pus10 family.

The enzyme catalyses uridine(54) in tRNA = pseudouridine(54) in tRNA. It carries out the reaction uridine(55) in tRNA = pseudouridine(55) in tRNA. Functionally, responsible for synthesis of pseudouridine from uracil-54 and uracil-55 in the psi GC loop of transfer RNAs. The sequence is that of tRNA pseudouridine synthase Pus10 from Methanosphaera stadtmanae (strain ATCC 43021 / DSM 3091 / JCM 11832 / MCB-3).